We begin with the raw amino-acid sequence, 339 residues long: Scoulerine-9-O-methyltransferase 3 (339 aa).

Met-161 is an S-adenosyl-L-methionine binding site. Residue Asp-164 participates in substrate binding. Residues Thr-165, Gly-191, Asp-214, 228–229, and Lys-242 each bind S-adenosyl-L-methionine; that span reads DV. 243–247 contacts substrate; that stretch reads SILHE. The active-site Proton acceptor is His-246.

It belongs to the class I-like SAM-binding methyltransferase superfamily. Cation-independent O-methyltransferase family. COMT subfamily. Homodimer. Forms heterodimer with SOMT2. The heterodimer SOMT2-SOMT3 possesses 3-O-acetyl-4'-O-demethylpapaveroxine 4'-O-methyltransferase activity, where SOMT2 is the catalytic subunit. As to expression, highly expressed in capsules. Expressed is stems. Expressed at low levels in roots.

The enzyme catalyses (S)-scoulerine + S-adenosyl-L-methionine = (S)-tetrahydrocolumbamine + S-adenosyl-L-homocysteine + H(+). It participates in alkaloid biosynthesis. Its function is as follows. Methyltransferase involved in the biosynthesis of the benzylisoquinoline alkaloid noscapine. Catalyzes the conversion of (S)-scoulerine to (S)-tetrahydrocolumbamine. The polypeptide is Scoulerine-9-O-methyltransferase 3 (Papaver somniferum (Opium poppy)).